The sequence spans 426 residues: Tol-Pal system protein TolB (426 aa).

A signal peptide spans 1-24 (MKLKSRFTSIIGVITLFFSQTVTA).

This sequence belongs to the TolB family. As to quaternary structure, the Tol-Pal system is composed of five core proteins: the inner membrane proteins TolA, TolQ and TolR, the periplasmic protein TolB and the outer membrane protein Pal. They form a network linking the inner and outer membranes and the peptidoglycan layer.

Its subcellular location is the periplasm. Its function is as follows. Part of the Tol-Pal system, which plays a role in outer membrane invagination during cell division and is important for maintaining outer membrane integrity. The protein is Tol-Pal system protein TolB of Actinobacillus pleuropneumoniae serotype 5b (strain L20).